A 470-amino-acid polypeptide reads, in one-letter code: MTKTLPEDFIFGGATAAYQAEGATNTDGKGRVAWDTYLEENYWYTAEPASDFYDRYPVDLELSEKFGVNGIRISIAWSRIFPNGYGEVNPKGVEYYHKLFAECHKRHVEPFVTLHHFDTPEVLHKDGDFLNRKTIDYFVDYAEYCFKEFPEVKYWTTFNEIGPIGDGQYLVGKFPPGIKYDFEKVFQSHHNMMVAHARAVKLFKDGGYKGEIGVVHALPTKYPFDPSNPEDVRAAELEDIIHNKFILDATYLGKYSRETMEGVQHILSVNGGKLNITDEDYAILDAAKDLNDFLGINYYMSDWMRGYDGESEITHNATGDKGGSKYQLKGVGQREFDVDVPRTDWDWMIYPQGLYDQIMRVVKDYPNYHKIYITENGLGYKDEFIESEKTVHDDARIDYVRQHLNVIADAIIDGANVKGYFIWSLMDVFSWSNGYEKRYGLFYVDFETQERYPKKSAYWYKELAETKEIK.

D-galactose 6-phosphate-binding residues include glutamine 19, histidine 116, asparagine 159, glutamate 160, and asparagine 297. The Proton donor role is filled by glutamate 160. Glutamate 375 (nucleophile) is an active-site residue. D-galactose 6-phosphate contacts are provided by serine 430, tryptophan 431, lysine 437, and tyrosine 439.

It belongs to the glycosyl hydrolase 1 family.

It carries out the reaction a 6-phospho-beta-D-galactoside + H2O = D-galactose 6-phosphate + an alcohol. It functions in the pathway carbohydrate metabolism; lactose degradation; D-galactose 6-phosphate and beta-D-glucose from lactose 6-phosphate: step 1/1. The chain is 6-phospho-beta-galactosidase from Staphylococcus aureus (strain COL).